We begin with the raw amino-acid sequence, 391 residues long: MFDYSIFAKEIDELKNQGLYTYIRTLESPQGAWLVIDGKKVLNLCSNNYLGFANEERLKNAAKQAVEKWGVGPGAVRTIAGTFSLHNELEETLAKFKKVEATIFLQSGFVANQAVIPAITNEEDAILSDELNHASIIDGVRLSKAKRFVWKHRDIKDLEEKLKEAKDARRKLIITDGVFSMDGDLAPLPEIVELAEKYNAMVMVDDAHGEGVLGSHGRGIVDHFGLHGRVDIEIGTLSKAFGVLGGYIAGKKELIDYLKQKARPFLFSSPLSPADTAAALEATKILQESDERVKRLWDNAKYFKEEMKKLGFDTGESETPITPVMLYDAKLSTQFSKELFEEGIFAQSIGYPTVPKGKARIRVMISAVHTKEDLDFALEKFEKVGKKLGVI.

108–109 (GF) serves as a coordination point for pyridoxal 5'-phosphate. Position 133 (histidine 133) interacts with substrate. The pyridoxal 5'-phosphate site is built by serine 180, histidine 208, and threonine 236. N6-(pyridoxal phosphate)lysine is present on lysine 239. Threonine 353 contacts substrate.

This sequence belongs to the class-II pyridoxal-phosphate-dependent aminotransferase family. BioF subfamily. Homodimer. Pyridoxal 5'-phosphate serves as cofactor.

The enzyme catalyses 6-carboxyhexanoyl-[ACP] + L-alanine + H(+) = (8S)-8-amino-7-oxononanoate + holo-[ACP] + CO2. Its pathway is cofactor biosynthesis; biotin biosynthesis. In terms of biological role, catalyzes the decarboxylative condensation of pimeloyl-[acyl-carrier protein] and L-alanine to produce 8-amino-7-oxononanoate (AON), [acyl-carrier protein], and carbon dioxide. This chain is 8-amino-7-oxononanoate synthase, found in Thermosipho melanesiensis (strain DSM 12029 / CIP 104789 / BI429).